A 161-amino-acid chain; its full sequence is Zinc finger A20 and AN1 domain-containing stress-associated protein 9 (161 aa).

The segment at proline 17–threonine 51 adopts an A20-type zinc-finger fold. Residues cysteine 23, cysteine 27, cysteine 39, and cysteine 42 each contribute to the Zn(2+) site. The segment at phenylalanine 62 to serine 99 is disordered. Basic and acidic residues predominate over residues alanine 75–alanine 90. The AN1-type zinc-finger motif lies at lysine 96–glycine 142. Residues cysteine 102, cysteine 105, cysteine 116, cysteine 118, cysteine 123, histidine 126, histidine 132, and cysteine 134 each contribute to the Zn(2+) site.

Functionally, may be involved in environmental stress response. This chain is Zinc finger A20 and AN1 domain-containing stress-associated protein 9 (SAP9), found in Oryza sativa subsp. japonica (Rice).